The sequence spans 264 residues: uncharacterized protein (264 aa).

Residues 7-27 (LTLGICLVLLIILIVGYVIMT) traverse the membrane as a helical segment.

The protein belongs to the staphylococcal tandem lipoprotein family.

The protein localises to the cell membrane. This is an uncharacterized protein from Staphylococcus aureus (strain N315).